The sequence spans 106 residues: Nucleoid-associated protein bll8115 (106 aa).

This sequence belongs to the YbaB/EbfC family. In terms of assembly, homodimer.

The protein resides in the cytoplasm. Its subcellular location is the nucleoid. Its function is as follows. Binds to DNA and alters its conformation. May be involved in regulation of gene expression, nucleoid organization and DNA protection. In Bradyrhizobium diazoefficiens (strain JCM 10833 / BCRC 13528 / IAM 13628 / NBRC 14792 / USDA 110), this protein is Nucleoid-associated protein bll8115.